Reading from the N-terminus, the 450-residue chain is MEKKMQNTIAAIATAYGVSSISIIRVSGNAALDIAKKISHLEEVKPRHAHLTSLYNSQNDLIDQAIMIYFKAPFSFTGEEIVEFQCHGGMIVAQEILDTILSYGIRLAEPGEFSKRAFFNGKIDLTEAEAISKLIEAKSVDAAKILAKQMKGELKYFVDESRDALLRSLAYSEVMIDYAEEDIPDDIMRSIVTQLDGLSEQIMKIVDASYRRRGLIEGFKVAIIGKPNVGKSSLLNALLSYDRAIVSDIAGTTRDTIEEQVRIGSHIIRLVDTAGIRESEDTIEKIGIERSLSSVEDADIIIALFDGSREFDSEDEKILAIVDALQDKHIIVAINKSDLEMKLDGDRINSYDPIEVSAKKGFVKLTRQMEALLDSIGEGEELMLISARQIEAVNRAKNAIAEAKEPLMNGELEFFSYHLQEAVKAISSISKPYDSEEILDKMFGEFCLGK.

(6S)-5-formyl-5,6,7,8-tetrahydrofolate contacts are provided by arginine 25, glutamate 83, and lysine 122. One can recognise a TrmE-type G domain in the interval 218–377 (GFKVAIIGKP…QMEALLDSIG (160 aa)). Residue asparagine 228 coordinates K(+). GTP-binding positions include 228–233 (NVGKSS), 247–253 (SDIAGTT), and 272–275 (DTAG). Serine 232 contributes to the Mg(2+) binding site. Positions 247, 249, and 252 each coordinate K(+). A Mg(2+)-binding site is contributed by threonine 253. Residue lysine 450 coordinates (6S)-5-formyl-5,6,7,8-tetrahydrofolate.

This sequence belongs to the TRAFAC class TrmE-Era-EngA-EngB-Septin-like GTPase superfamily. TrmE GTPase family. In terms of assembly, homodimer. Heterotetramer of two MnmE and two MnmG subunits. The cofactor is K(+).

The protein localises to the cytoplasm. Exhibits a very high intrinsic GTPase hydrolysis rate. Involved in the addition of a carboxymethylaminomethyl (cmnm) group at the wobble position (U34) of certain tRNAs, forming tRNA-cmnm(5)s(2)U34. This chain is tRNA modification GTPase MnmE, found in Sulfurovum sp. (strain NBC37-1).